A 527-amino-acid chain; its full sequence is Metal transporter Nramp6 (527 aa).

12 helical membrane-spanning segments follow: residues 38-58 (FFSY…PGNF), 71-91 (ELLW…SLAA), 115-135 (FMLW…EVIG), 143-163 (LFNI…LILL), 173-193 (LEFL…VELH), 221-241 (ISLL…ALVL), 264-284 (GLAL…SGAV), 321-341 (LFAI…TYAG), 364-384 (CLAI…GAGK), 385-405 (LIII…VPLL), 427-447 (TWII…SSFI), and 458-478 (VAIV…LAAI).

Belongs to the NRAMP (TC 2.A.55) family. As to expression, expressed in the vascular bundles of shoots, cotyledons, young leaves, sepals and petals, at the top of the flower stem and in the style. Expressed in the peduncle of developing siliques as well as in the septum and the funiculi.

It localises to the endomembrane system. Probable intracellular cadmium (Cd) transporter that participates in the distribution or availability of Cd within the cell. The sequence is that of Metal transporter Nramp6 (NRAMP6) from Arabidopsis thaliana (Mouse-ear cress).